A 316-amino-acid chain; its full sequence is Ribosomal RNA small subunit methyltransferase H (316 aa).

S-adenosyl-L-methionine-binding positions include 37–39 (GGH), Asp-56, Phe-83, Asp-106, and His-113. The interval 276-316 (PILPSEEETKENPASRSAKLRVLRKTKSADKKYKKENSKEE) is disordered. A compositionally biased stretch (basic and acidic residues) spans 302-316 (KSADKKYKKENSKEE).

This sequence belongs to the methyltransferase superfamily. RsmH family.

It is found in the cytoplasm. The enzyme catalyses cytidine(1402) in 16S rRNA + S-adenosyl-L-methionine = N(4)-methylcytidine(1402) in 16S rRNA + S-adenosyl-L-homocysteine + H(+). Functionally, specifically methylates the N4 position of cytidine in position 1402 (C1402) of 16S rRNA. This Leptospira borgpetersenii serovar Hardjo-bovis (strain L550) protein is Ribosomal RNA small subunit methyltransferase H.